The chain runs to 652 residues: Na(+)/H(+) antiporter NhaA 3 (652 aa).

Residues 1 to 428 (MTGEIPRGRR…GASLTTWLVF (428 aa)) are na(+)/H(+) antiporter NhaA. 11 helical membrane passes run 32-52 (ETGSARVLLAAAVVALAWVNL), 78-98 (LRFWVNSGLMTFFFLVIGLEV), 114-134 (MLPLLAGIGGILAPIAIYLAF), 142-162 (VGWGVVMATDTALALGMLAVL), 173-193 (FLLTVAVVDDLIVIVVLAIAY), 200-220 (MALFVAAGIFALVLLIRAAGV), 227-249 (LLLGVAAWLAVSESGVDPVVVGL), 306-326 (HPWASYLIVPLFALANVGVVV), 342-362 (GVLFAYVVGKPAGIVIASMLV), 376-396 (WAAIIGVGTVSGIGFTIALLI), and 411-431 (VGILVATVGASLTTWLVFRLA). Residues 429 to 623 (RLAARLAPAR…LSAAVMSAFA (195 aa)) enclose the Thioredoxin domain. Residues 626–652 (RLRPEGGREPDHRSEAGSEQPDEEPGT) form a disordered region. A compositionally biased stretch (basic and acidic residues) spans 627-641 (LRPEGGREPDHRSEA).

It in the N-terminal section; belongs to the NhaA Na(+)/H(+) (TC 2.A.33) antiporter family.

Its subcellular location is the cell membrane. The catalysed reaction is Na(+)(in) + 2 H(+)(out) = Na(+)(out) + 2 H(+)(in). In terms of biological role, na(+)/H(+) antiporter that extrudes sodium in exchange for external protons. The polypeptide is Na(+)/H(+) antiporter NhaA 3 (Salinispora tropica (strain ATCC BAA-916 / DSM 44818 / JCM 13857 / NBRC 105044 / CNB-440)).